Consider the following 396-residue polypeptide: Elongation factor Tu (396 aa).

In terms of domain architecture, tr-type G spans 10-206 (KPHVNVGTIG…ALDSYIPTPE (197 aa)). The G1 stretch occupies residues 19 to 26 (GHVDHGKT). 19-26 (GHVDHGKT) contributes to the GTP binding site. Mg(2+) is bound at residue T26. Residues 60–64 (GITIN) form a G2 region. Residues 81-84 (DCPG) are G3. GTP-binding positions include 81–85 (DCPGH) and 136–139 (NKCD). A G4 region spans residues 136–139 (NKCD). A G5 region spans residues 174 to 176 (SAL).

Belongs to the TRAFAC class translation factor GTPase superfamily. Classic translation factor GTPase family. EF-Tu/EF-1A subfamily. Monomer.

It localises to the cytoplasm. The catalysed reaction is GTP + H2O = GDP + phosphate + H(+). GTP hydrolase that promotes the GTP-dependent binding of aminoacyl-tRNA to the A-site of ribosomes during protein biosynthesis. The chain is Elongation factor Tu from Azoarcus sp. (strain BH72).